The sequence spans 298 residues: MHAAVERFLHSLSGHASPATLDAYRRDLTALARFLEASGIDDWAALDVAQVRRFMGAERTRGLAPRSLARRRAALSRFADHLVRSGILDHNPVALTQTPRQPRHLPRPVDVDQLARFLDTPHDGTPLAVRDQAMLELFYSCGLRLAELTALDVTDLDARRLRVVGKGNKPRQMPIGRRAQAALADWYRLRGQLAGHDEPALFVGQRGARLGHRAVQKRLAQLARERGLAEHLHPHRLRHSFASHLLESSQDLRAVQELLGHANLSTTQVYTRLDWQHLADAYDQAHPRARRRAPPDDT.

Residues 1–83 (MHAAVERFLH…ALSRFADHLV (83 aa)) form the Core-binding (CB) domain. Residues 104–283 (HLPRPVDVDQ…DWQHLADAYD (180 aa)) enclose the Tyr recombinase domain. Residues Arg-144, Lys-166, His-235, Arg-238, and His-261 contribute to the active site. The active-site O-(3'-phospho-DNA)-tyrosine intermediate is Tyr-270.

It belongs to the 'phage' integrase family. XerC subfamily. In terms of assembly, forms a cyclic heterotetrameric complex composed of two molecules of XerC and two molecules of XerD.

The protein resides in the cytoplasm. Site-specific tyrosine recombinase, which acts by catalyzing the cutting and rejoining of the recombining DNA molecules. The XerC-XerD complex is essential to convert dimers of the bacterial chromosome into monomers to permit their segregation at cell division. It also contributes to the segregational stability of plasmids. This is Tyrosine recombinase XerC from Chromohalobacter salexigens (strain ATCC BAA-138 / DSM 3043 / CIP 106854 / NCIMB 13768 / 1H11).